A 218-amino-acid polypeptide reads, in one-letter code: Transmembrane gamma-carboxyglutamic acid protein 1 (218 aa).

The propeptide occupies 1-20 (MGRVFLTGEKANSILKRYPR). The region spanning 21-66 (ANGFFEEIRQGNIERECKEEFCTFEEAREAFENNEKTKEFWSTYTK) is the Gla domain. Topologically, residues 21–83 (ANGFFEEIRQ…RGSDWFQFYL (63 aa)) are extracellular. Residues C37 and C42 are joined by a disulfide bond. A helical membrane pass occupies residues 84–106 (TFPLIFGLFIILLVIFLIWRCFL). Over 107 to 218 (RNKTRRQTVT…PMVPVVTTIK (112 aa)) the chain is Cytoplasmic. The tract at residues 161–195 (TRLSNCDPPPTYEEATGQVNLQRSETEPHLDPPPE) is disordered.

Gla residues are produced after subsequent post-translational modifications of glutamate by a vitamin K-dependent gamma-carboxylase. In terms of tissue distribution, highly expressed in the spinal cord.

The protein resides in the membrane. The polypeptide is Transmembrane gamma-carboxyglutamic acid protein 1 (PRRG1) (Homo sapiens (Human)).